The sequence spans 216 residues: Ephrin-A1 (216 aa).

A signal peptide spans 1–28; that stretch reads MMELYRAAVQLIVGVGLGVGLWLREAQG. Positions 29 to 161 constitute an Ephrin RBD domain; that stretch reads ERHIVFWNSS…RLRVHVSGRT (133 aa). The N-linked (GlcNAc...) asparagine glycan is linked to Asn-36. Cys-61 and Cys-102 are disulfide-bonded. The tract at residues 162-181 is disordered; the sequence is TPPPVNVHTPRSHIQSDEPE. The GPI-anchor amidated serine moiety is linked to residue Ser-195. The propeptide at 196 to 216 is removed in mature form; the sequence is AAPGTPCTLYGLLLAALLLRL.

Belongs to the ephrin family. Binds to the receptor tyrosine kinases EPHA2, EPHA4, EPHA5, EPHA6 and EPHA7. Also binds with low affinity to EPHA1.

It is found in the membrane. Functionally, cell surface GPI-bound ligand for Eph receptors, a family of receptor tyrosine kinases which are crucial for migration, repulsion and adhesion during neuronal, vascular and epithelial development. Binds promiscuously Eph receptors residing on adjacent cells, leading to contact-dependent bidirectional signaling into neighboring cells. This is Ephrin-A1 (efna1) from Xenopus laevis (African clawed frog).